The chain runs to 398 residues: CCA-adding enzyme (398 aa).

ATP contacts are provided by Gly32 and Arg35. CTP contacts are provided by Gly32 and Arg35. Asp45 and Asp47 together coordinate Mg(2+). ATP is bound by residues Arg119, Asp162, Arg165, Arg168, and Arg171. CTP is bound by residues Arg119, Asp162, Arg165, Arg168, and Arg171.

It belongs to the tRNA nucleotidyltransferase/poly(A) polymerase family. Bacterial CCA-adding enzyme type 3 subfamily. As to quaternary structure, homodimer. Mg(2+) serves as cofactor.

The enzyme catalyses a tRNA precursor + 2 CTP + ATP = a tRNA with a 3' CCA end + 3 diphosphate. It catalyses the reaction a tRNA with a 3' CCA end + 2 CTP + ATP = a tRNA with a 3' CCACCA end + 3 diphosphate. In terms of biological role, catalyzes the addition and repair of the essential 3'-terminal CCA sequence in tRNAs without using a nucleic acid template. Adds these three nucleotides in the order of C, C, and A to the tRNA nucleotide-73, using CTP and ATP as substrates and producing inorganic pyrophosphate. tRNA 3'-terminal CCA addition is required both for tRNA processing and repair. Also involved in tRNA surveillance by mediating tandem CCA addition to generate a CCACCA at the 3' terminus of unstable tRNAs. While stable tRNAs receive only 3'-terminal CCA, unstable tRNAs are marked with CCACCA and rapidly degraded. This is CCA-adding enzyme from Lactococcus lactis subsp. lactis (strain IL1403) (Streptococcus lactis).